The primary structure comprises 358 residues: Nicotinate-nucleotide--dimethylbenzimidazole phosphoribosyltransferase (358 aa).

E314 functions as the Proton acceptor in the catalytic mechanism.

The protein belongs to the CobT family.

The enzyme catalyses 5,6-dimethylbenzimidazole + nicotinate beta-D-ribonucleotide = alpha-ribazole 5'-phosphate + nicotinate + H(+). The protein operates within nucleoside biosynthesis; alpha-ribazole biosynthesis; alpha-ribazole from 5,6-dimethylbenzimidazole: step 1/2. Functionally, catalyzes the synthesis of alpha-ribazole-5'-phosphate from nicotinate mononucleotide (NAMN) and 5,6-dimethylbenzimidazole (DMB). This chain is Nicotinate-nucleotide--dimethylbenzimidazole phosphoribosyltransferase, found in Mycobacterium marinum (strain ATCC BAA-535 / M).